The following is an 870-amino-acid chain: Leucine--tRNA ligase (870 aa).

Positions 36 to 46 match the 'HIGH' region motif; the sequence is PYPSGKIHLGH. The 'KMSKS' region signature appears at 602–606; it reads KMSKS. Residue K605 participates in ATP binding.

It belongs to the class-I aminoacyl-tRNA synthetase family.

Its subcellular location is the cytoplasm. It carries out the reaction tRNA(Leu) + L-leucine + ATP = L-leucyl-tRNA(Leu) + AMP + diphosphate. This chain is Leucine--tRNA ligase, found in Rickettsia akari (strain Hartford).